The primary structure comprises 264 residues: tRNA (guanine-N(1)-)-methyltransferase (264 aa).

S-adenosyl-L-methionine-binding positions include Gly133 and 152–157 (LGDFVM). A compositionally biased stretch (basic and acidic residues) spans 240–251 (QRRPDLWRKARG). Residues 240 to 264 (QRRPDLWRKARGGEPPADESGEVRR) form a disordered region. Residues 255–264 (PADESGEVRR) are compositionally biased toward acidic residues.

It belongs to the RNA methyltransferase TrmD family. Homodimer.

The protein resides in the cytoplasm. It catalyses the reaction guanosine(37) in tRNA + S-adenosyl-L-methionine = N(1)-methylguanosine(37) in tRNA + S-adenosyl-L-homocysteine + H(+). Functionally, specifically methylates guanosine-37 in various tRNAs. This chain is tRNA (guanine-N(1)-)-methyltransferase, found in Sorangium cellulosum (strain So ce56) (Polyangium cellulosum (strain So ce56)).